A 391-amino-acid chain; its full sequence is Thyroid hormone receptor alpha-B (391 aa).

A modulating region spans residues 1–32 (MAQWPEKEEEEQPMFGEEYTGYIPSYLEKDEP). 2 NR C4-type zinc fingers span residues 33-53 (CVVC…CEGC) and 71-95 (CKYD…FKKC). Positions 33–100 (CVVCGDKATG…RFKKCIAVGM (68 aa)) form a DNA-binding region, nuclear receptor. Residues 143 to 388 (AEWELIRMVT…PPLFLEVFED (246 aa)) form the NR LBD domain.

It belongs to the nuclear hormone receptor family. NR1 subfamily.

It localises to the nucleus. In terms of biological role, high affinity receptor for triiodothyronine. This chain is Thyroid hormone receptor alpha-B (thra2), found in Paralichthys olivaceus (Bastard halibut).